Here is a 226-residue protein sequence, read N- to C-terminus: Putative N-acetylmannosamine-6-phosphate 2-epimerase 1 (226 aa).

Belongs to the NanE family.

The enzyme catalyses an N-acyl-D-glucosamine 6-phosphate = an N-acyl-D-mannosamine 6-phosphate. It participates in amino-sugar metabolism; N-acetylneuraminate degradation; D-fructose 6-phosphate from N-acetylneuraminate: step 3/5. Converts N-acetylmannosamine-6-phosphate (ManNAc-6-P) to N-acetylglucosamine-6-phosphate (GlcNAc-6-P). In Salmonella paratyphi A (strain ATCC 9150 / SARB42), this protein is Putative N-acetylmannosamine-6-phosphate 2-epimerase 1.